A 414-amino-acid chain; its full sequence is MQSWPMPTIPSVPGKPAVLSLFDTSDQLIKPVEVDTPEVGVYVCGITPYDSTHLGHAATYLTFDLINRQLIDAGHRVHFVQNITDVDEPLFERALRDGVDWRELGSSQIDLFRSDMENLSVIPPRHYVGAMESIPEVIAMVETMLANGTAYIVESDSYRDIYASITATTQFGYESHYSRELMEQFFAERGGDPERVGKKDSLDALIWRAHRLGEPSWDAPFGAGRPGWHVECSAIATHHLGSHFAIQGGGSDLIFPHHEFSAAHAEATFGESRMAGHYVHTGMIGLDGTKMSKSLGNLVFVSRLTSEGYHPSDIRLGVFAGHYRDDRDWSTDLLTAAQERRQAWITAADNARDVQQVQQTIQKIRHLLANDLNTPAVLAEVDNWANLIPLNDSARTEAGRLMASGLDALLGVKI.

Position 44 (Cys-44) interacts with Zn(2+). L-cysteinyl-5'-AMP is bound by residues 44 to 47 (CGIT), Thr-59, and 82 to 84 (NIT). The 'HIGH' region motif lies at 46-56 (ITPYDSTHLGH). Positions 188–193 (ERGGDP) match the 'ERGGDP' region motif. Trp-228 contacts L-cysteinyl-5'-AMP. Cys-232 provides a ligand contact to Zn(2+). An L-cysteinyl-5'-AMP-binding site is contributed by 250 to 252 (GSD). His-257 contributes to the Zn(2+) binding site. An L-cysteinyl-5'-AMP-binding site is contributed by Ile-284. Residues 290 to 294 (KMSKS) carry the 'KMSKS' region motif.

It belongs to the class-I aminoacyl-tRNA synthetase family. MshC subfamily. As to quaternary structure, monomer. The cofactor is Zn(2+).

The catalysed reaction is 1D-myo-inositol 2-amino-2-deoxy-alpha-D-glucopyranoside + L-cysteine + ATP = 1D-myo-inositol 2-(L-cysteinylamino)-2-deoxy-alpha-D-glucopyranoside + AMP + diphosphate + H(+). Catalyzes the ATP-dependent condensation of GlcN-Ins and L-cysteine to form L-Cys-GlcN-Ins. The polypeptide is L-cysteine:1D-myo-inositol 2-amino-2-deoxy-alpha-D-glucopyranoside ligase (mshC) (Corynebacterium diphtheriae (strain ATCC 700971 / NCTC 13129 / Biotype gravis)).